The sequence spans 178 residues: ATP synthase subunit delta (178 aa).

It belongs to the ATPase delta chain family. As to quaternary structure, F-type ATPases have 2 components, F(1) - the catalytic core - and F(0) - the membrane proton channel. F(1) has five subunits: alpha(3), beta(3), gamma(1), delta(1), epsilon(1). F(0) has three main subunits: a(1), b(2) and c(10-14). The alpha and beta chains form an alternating ring which encloses part of the gamma chain. F(1) is attached to F(0) by a central stalk formed by the gamma and epsilon chains, while a peripheral stalk is formed by the delta and b chains.

Its subcellular location is the cell inner membrane. Functionally, f(1)F(0) ATP synthase produces ATP from ADP in the presence of a proton or sodium gradient. F-type ATPases consist of two structural domains, F(1) containing the extramembraneous catalytic core and F(0) containing the membrane proton channel, linked together by a central stalk and a peripheral stalk. During catalysis, ATP synthesis in the catalytic domain of F(1) is coupled via a rotary mechanism of the central stalk subunits to proton translocation. Its function is as follows. This protein is part of the stalk that links CF(0) to CF(1). It either transmits conformational changes from CF(0) to CF(1) or is implicated in proton conduction. The chain is ATP synthase subunit delta from Thioalkalivibrio sulfidiphilus (strain HL-EbGR7).